A 512-amino-acid chain; its full sequence is Protein SHC1 (512 aa).

A compositionally biased stretch (acidic residues) spans 101–113; that stretch reads EQDEFENDVEDDA. Disordered regions lie at residues 101-122 and 144-165; these read EQDE…EKSQ and DGNS…SVAL. 4 Sel1-like repeats span residues 318–353, 354–389, 390–429, and 433–470; these read PDAQ…KRLH, IESV…TKNH, PAAM…SMAS, and CGAP…ALGH.

It belongs to the SKT5 family.

It localises to the cytoplasm. It is found in the cytoplasmic granule membrane. In terms of biological role, required for the activation of chitin synthase III (CHS3) activity during the sporulation process. The polypeptide is Protein SHC1 (SHC1) (Saccharomyces cerevisiae (strain YJM789) (Baker's yeast)).